Reading from the N-terminus, the 92-residue chain is Small ribosomal subunit protein bS20 (92 aa).

The protein belongs to the bacterial ribosomal protein bS20 family.

Its function is as follows. Binds directly to 16S ribosomal RNA. The protein is Small ribosomal subunit protein bS20 of Magnetococcus marinus (strain ATCC BAA-1437 / JCM 17883 / MC-1).